Here is a 208-residue protein sequence, read N- to C-terminus: Ribosomal RNA large subunit methyltransferase E (208 aa).

S-adenosyl-L-methionine is bound by residues G62, W64, D82, D98, and D123. The active-site Proton acceptor is the K163.

It belongs to the class I-like SAM-binding methyltransferase superfamily. RNA methyltransferase RlmE family.

Its subcellular location is the cytoplasm. It catalyses the reaction uridine(2552) in 23S rRNA + S-adenosyl-L-methionine = 2'-O-methyluridine(2552) in 23S rRNA + S-adenosyl-L-homocysteine + H(+). Functionally, specifically methylates the uridine in position 2552 of 23S rRNA at the 2'-O position of the ribose in the fully assembled 50S ribosomal subunit. In Haemophilus ducreyi (strain 35000HP / ATCC 700724), this protein is Ribosomal RNA large subunit methyltransferase E.